The following is a 154-amino-acid chain: Peptide methionine sulfoxide reductase MsrB (154 aa).

A MsrB domain is found at 28-150 (DQQWREQLSE…NSVSLIFNKI (123 aa)). Residues Cys-67, Cys-70, Cys-116, and Cys-119 each contribute to the Zn(2+) site. Cys-139 acts as the Nucleophile in catalysis.

The protein belongs to the MsrB Met sulfoxide reductase family. The cofactor is Zn(2+).

It catalyses the reaction L-methionyl-[protein] + [thioredoxin]-disulfide + H2O = L-methionyl-(R)-S-oxide-[protein] + [thioredoxin]-dithiol. The polypeptide is Peptide methionine sulfoxide reductase MsrB (Vibrio vulnificus (strain CMCP6)).